The sequence spans 366 residues: Mannonate dehydratase (366 aa).

The protein belongs to the mannonate dehydratase family. Requires Fe(2+) as cofactor. The cofactor is Mn(2+).

It catalyses the reaction D-mannonate = 2-dehydro-3-deoxy-D-gluconate + H2O. It participates in carbohydrate metabolism; pentose and glucuronate interconversion. Its function is as follows. Catalyzes the dehydration of D-mannonate. The polypeptide is Mannonate dehydratase (Streptococcus suis (strain 98HAH33)).